We begin with the raw amino-acid sequence, 194 residues long: Alkyl hydroperoxide reductase AhpD (194 aa).

The active-site Proton donor is Cys-132. A disulfide bond links Cys-132 and Cys-135. The active-site Cysteine sulfenic acid (-SOH) intermediate is Cys-135.

Belongs to the AhpD family.

It carries out the reaction N(6)-[(R)-dihydrolipoyl]-L-lysyl-[lipoyl-carrier protein] + a hydroperoxide = N(6)-[(R)-lipoyl]-L-lysyl-[lipoyl-carrier protein] + an alcohol + H2O. Functionally, antioxidant protein with alkyl hydroperoxidase activity. Required for the reduction of the AhpC active site cysteine residues and for the regeneration of the AhpC enzyme activity. The polypeptide is Alkyl hydroperoxide reductase AhpD (Koribacter versatilis (strain Ellin345)).